The primary structure comprises 335 residues: Beta-ketoacyl-[acyl-carrier-protein] synthase III (335 aa).

Catalysis depends on residues Cys-116 and His-256. The segment at 257-261 (QANLR) is ACP-binding. Residue Asn-286 is part of the active site.

The protein belongs to the thiolase-like superfamily. FabH family. In terms of assembly, homodimer.

Its subcellular location is the cytoplasm. The enzyme catalyses malonyl-[ACP] + acetyl-CoA + H(+) = 3-oxobutanoyl-[ACP] + CO2 + CoA. It functions in the pathway lipid metabolism; fatty acid biosynthesis. Functionally, catalyzes the condensation reaction of fatty acid synthesis by the addition to an acyl acceptor of two carbons from malonyl-ACP. Catalyzes the first condensation reaction which initiates fatty acid synthesis and may therefore play a role in governing the total rate of fatty acid production. Possesses both acetoacetyl-ACP synthase and acetyl transacylase activities. Its substrate specificity determines the biosynthesis of branched-chain and/or straight-chain of fatty acids. The polypeptide is Beta-ketoacyl-[acyl-carrier-protein] synthase III (Porphyromonas gingivalis (strain ATCC BAA-308 / W83)).